A 467-amino-acid chain; its full sequence is 3-isopropylmalate dehydratase large subunit (467 aa).

[4Fe-4S] cluster is bound by residues Cys-347, Cys-407, and Cys-410. Positions Gln-422–Arg-442 are enriched in polar residues. A disordered region spans residues Gln-422–Thr-443.

This sequence belongs to the aconitase/IPM isomerase family. LeuC type 1 subfamily. As to quaternary structure, heterodimer of LeuC and LeuD. [4Fe-4S] cluster is required as a cofactor.

It carries out the reaction (2R,3S)-3-isopropylmalate = (2S)-2-isopropylmalate. It functions in the pathway amino-acid biosynthesis; L-leucine biosynthesis; L-leucine from 3-methyl-2-oxobutanoate: step 2/4. Functionally, catalyzes the isomerization between 2-isopropylmalate and 3-isopropylmalate, via the formation of 2-isopropylmaleate. In Nostoc punctiforme (strain ATCC 29133 / PCC 73102), this protein is 3-isopropylmalate dehydratase large subunit.